The following is a 342-amino-acid chain: Glucokinase (342 aa).

Residue 7–12 coordinates ATP; it reads GDIGGT.

It belongs to the bacterial glucokinase family.

It localises to the cytoplasm. It catalyses the reaction D-glucose + ATP = D-glucose 6-phosphate + ADP + H(+). The chain is Glucokinase from Trichormus variabilis (strain ATCC 29413 / PCC 7937) (Anabaena variabilis).